Here is a 332-residue protein sequence, read N- to C-terminus: Ketol-acid reductoisomerase (NADP(+)) (332 aa).

Residues 1-182 enclose the KARI N-terminal Rossmann domain; sequence MAQTWKDTDI…GSARAGLIKT (182 aa). NADP(+)-binding positions include 25-28, K48, S53, and 83-86; these read YGIQ and DMIQ. Residue H108 is part of the active site. G134 serves as a coordination point for NADP(+). Positions 183-329 constitute a KARI C-terminal knotted domain; that stretch reads AFKEEVETDW…KEMRKMMWPD (147 aa). Mg(2+)-binding residues include D191, E195, E227, and E231. S252 lines the substrate pocket.

The protein belongs to the ketol-acid reductoisomerase family. The cofactor is Mg(2+).

The enzyme catalyses (2R)-2,3-dihydroxy-3-methylbutanoate + NADP(+) = (2S)-2-acetolactate + NADPH + H(+). The catalysed reaction is (2R,3R)-2,3-dihydroxy-3-methylpentanoate + NADP(+) = (S)-2-ethyl-2-hydroxy-3-oxobutanoate + NADPH + H(+). The protein operates within amino-acid biosynthesis; L-isoleucine biosynthesis; L-isoleucine from 2-oxobutanoate: step 2/4. Its pathway is amino-acid biosynthesis; L-valine biosynthesis; L-valine from pyruvate: step 2/4. Its function is as follows. Involved in the biosynthesis of branched-chain amino acids (BCAA). Catalyzes an alkyl-migration followed by a ketol-acid reduction of (S)-2-acetolactate (S2AL) to yield (R)-2,3-dihydroxy-isovalerate. In the isomerase reaction, S2AL is rearranged via a Mg-dependent methyl migration to produce 3-hydroxy-3-methyl-2-ketobutyrate (HMKB). In the reductase reaction, this 2-ketoacid undergoes a metal-dependent reduction by NADPH to yield (R)-2,3-dihydroxy-isovalerate. The chain is Ketol-acid reductoisomerase (NADP(+)) from Nitrosopumilus maritimus (strain SCM1).